A 348-amino-acid chain; its full sequence is Dihydroorotase (348 aa).

Residues His14 and His16 each coordinate Zn(2+). Substrate-binding positions include 16–18 (HLR) and Asn42. The Zn(2+) site is built by Lys100, His137, and His175. Residue Lys100 is modified to N6-carboxylysine. A substrate-binding site is contributed by His137. Leu220 is a substrate binding site. Asp248 contacts Zn(2+). The active site involves Asp248. Positions 252 and 264 each coordinate substrate.

This sequence belongs to the metallo-dependent hydrolases superfamily. DHOase family. Class II DHOase subfamily. In terms of assembly, homodimer. Zn(2+) serves as cofactor.

It carries out the reaction (S)-dihydroorotate + H2O = N-carbamoyl-L-aspartate + H(+). The protein operates within pyrimidine metabolism; UMP biosynthesis via de novo pathway; (S)-dihydroorotate from bicarbonate: step 3/3. Catalyzes the reversible cyclization of carbamoyl aspartate to dihydroorotate. The sequence is that of Dihydroorotase from Ectopseudomonas mendocina (strain ymp) (Pseudomonas mendocina).